A 290-amino-acid polypeptide reads, in one-letter code: uncharacterized protein (290 aa).

Positions 1–61 constitute an HTH lysR-type domain; sequence MVMNMNHLHI…RDKHHGLMLT (61 aa). Residues 20-39 constitute a DNA-binding region (H-T-H motif); the sequence is ITEAAKELFISQPAVSKAIK.

The protein belongs to the LysR transcriptional regulatory family.

This is an uncharacterized protein from Bacillus subtilis (strain 168).